The following is a 141-amino-acid chain: MSIVIGADAAGLRLKEVVKDFLEKENFHLVDVTAEGQDFVDVTLAVAAEVNKEEQNLGIVIDAYGAGPFIVATKIKGMVAAEVSDERSAYMTRGHNNSRMITMGAQLVGDELAKNIAKGFVNGKYDGGRHQIRVDMLNKMG.

Belongs to the LacAB/RpiB family. Heteromultimeric protein consisting of LacA and LacB.

It catalyses the reaction aldehydo-D-galactose 6-phosphate = keto-D-tagatose 6-phosphate. It participates in carbohydrate metabolism; D-galactose 6-phosphate degradation; D-tagatose 6-phosphate from D-galactose 6-phosphate: step 1/1. This chain is Galactose-6-phosphate isomerase subunit LacA, found in Streptococcus pneumoniae serotype 4 (strain ATCC BAA-334 / TIGR4).